A 386-amino-acid chain; its full sequence is Glucose-1-phosphate adenylyltransferase (386 aa).

Alpha-D-glucose 1-phosphate-binding positions include Tyr99, Gly164, 179–180 (EK), and Ser190.

It belongs to the bacterial/plant glucose-1-phosphate adenylyltransferase family. In terms of assembly, homotetramer.

The catalysed reaction is alpha-D-glucose 1-phosphate + ATP + H(+) = ADP-alpha-D-glucose + diphosphate. Its pathway is glycan biosynthesis; glycogen biosynthesis. Involved in the biosynthesis of ADP-glucose, a building block required for the elongation reactions to produce glycogen. Catalyzes the reaction between ATP and alpha-D-glucose 1-phosphate (G1P) to produce pyrophosphate and ADP-Glc. The polypeptide is Glucose-1-phosphate adenylyltransferase (Clostridioides difficile (strain 630) (Peptoclostridium difficile)).